Reading from the N-terminus, the 261-residue chain is Polyamine aminopropyltransferase (261 aa).

One can recognise a PABS domain in the interval 1–219 (MHPFRRRVRP…AVMAFRQSPS (219 aa)). Residues Asp96 and 124-125 (DG) contribute to the S-methyl-5'-thioadenosine site. Asp142 functions as the Proton acceptor in the catalytic mechanism.

Belongs to the spermidine/spermine synthase family. As to quaternary structure, homodimer or homotetramer.

It is found in the cytoplasm. The catalysed reaction is S-adenosyl 3-(methylsulfanyl)propylamine + putrescine = S-methyl-5'-thioadenosine + spermidine + H(+). It participates in amine and polyamine biosynthesis; spermidine biosynthesis; spermidine from putrescine: step 1/1. Functionally, catalyzes the irreversible transfer of a propylamine group from the amino donor S-adenosylmethioninamine (decarboxy-AdoMet) to putrescine (1,4-diaminobutane) to yield spermidine. This Chromobacterium violaceum (strain ATCC 12472 / DSM 30191 / JCM 1249 / CCUG 213 / NBRC 12614 / NCIMB 9131 / NCTC 9757 / MK) protein is Polyamine aminopropyltransferase.